Reading from the N-terminus, the 556-residue chain is MSVSAFNRRWAAVILEALTRHGVRHVCIAPGSRSTPLTLAAAENPAFIHHTHFDERGLGHLALGLAKVSQQPVAVIVTSGTAVANLYPALIEAGLTGEKLILLTADRPPELIDCGANQAIRQAGMFASHPSQTLSLPRPTQDIPARWLVSTIDNALAMLHAGALHINCPFAEPLYGDMNDTGLVWQQRLGDWWQDEKPWLREARRLASDKQRDWFFWRQKRGVVVAGRMSAEEGKKVAQWAQTLGWPLIGDVLSQTGQPLPCADLWLGNAKAVTELQQAQIVVQLGSSLTGKRLLQWQATCEPEEYWVIDNIEGRLDPAHHRGRRLVAKIADWLEMHPAEKRKPWCVEIPRLAELAWQRVVAQRDTFGEAQLAHRIRDYLPEQGQLFVGNSLVVRLIDALSQLPAGYPVYSNRGASGIDGLLSTAAGVQRASAKSTLAIVGDLSALYDLNALALLRQVSAPFVLIVVNNNGGQIFSLLPTPQSKRERFYLMPQNVHFDHAAAMFNLRYHRPENWEELESVLAGAWRTPATTVIELVVNDTDGAQTLQQLLAQVSHL.

Belongs to the TPP enzyme family. MenD subfamily. Homodimer. Mg(2+) is required as a cofactor. The cofactor is Mn(2+). Requires thiamine diphosphate as cofactor.

It catalyses the reaction isochorismate + 2-oxoglutarate + H(+) = 5-enolpyruvoyl-6-hydroxy-2-succinyl-cyclohex-3-ene-1-carboxylate + CO2. Its pathway is quinol/quinone metabolism; 1,4-dihydroxy-2-naphthoate biosynthesis; 1,4-dihydroxy-2-naphthoate from chorismate: step 2/7. The protein operates within quinol/quinone metabolism; menaquinone biosynthesis. Catalyzes the thiamine diphosphate-dependent decarboxylation of 2-oxoglutarate and the subsequent addition of the resulting succinic semialdehyde-thiamine pyrophosphate anion to isochorismate to yield 2-succinyl-5-enolpyruvyl-6-hydroxy-3-cyclohexene-1-carboxylate (SEPHCHC). The protein is 2-succinyl-5-enolpyruvyl-6-hydroxy-3-cyclohexene-1-carboxylate synthase of Salmonella agona (strain SL483).